The following is a 237-amino-acid chain: MOB kinase activator 2 (237 aa).

A disordered region spans residues 1 to 21; that stretch reads MDWLMGKSKAKPNGKKPAAEE. Zn(2+)-binding residues include C78, C83, H157, and H162. The segment covering 217 to 229 has biased composition (gly residues); sequence GGSGDGAGSGGPG. A disordered region spans residues 217 to 237; it reads GGSGDGAGSGGPGAQNHVKER.

This sequence belongs to the MOB1/phocein family. In terms of assembly, binds STK38 and STK38L. In terms of processing, phosphorylated.

The protein localises to the nucleus. The protein resides in the cytoplasm. It is found in the perinuclear region. Functionally, stimulates the autophosphorylation and kinase activity of STK38 and STK38L. This Homo sapiens (Human) protein is MOB kinase activator 2 (MOB2).